The chain runs to 257 residues: MYIPTISPYAFKIGPIDVHWYGIFMAISIAIGGYYLYRQAMKLNYDEDFLLNLLMIVVISGVVGARLMFVLANYPEWFIKDPVQVLKIYEGGLSWHGAVLGGFLAGLYYCRKKGVRINPLEDFAVLGLSIGNILVRIGNIFNQEVLGRPTEFAFGRWPAQLVGVAMGIILLIRYFYIQKKHMPDGYQFWSFIFYYQLMRGLIEETVRDNPLIWPVYLNEKWGIGFFTLTQLVTPFILILAYWMIRRVLNDPNKQFYN.

Transmembrane regions (helical) follow at residues 13–33 (IGPI…AIGG), 49–69 (FLLN…RLMF), 88–108 (IYEG…AGLY), 123–143 (FAVL…IFNQ), 152–172 (FAFG…ILLI), 185–202 (GYQF…RGLI), and 223–243 (IGFF…AYWM). Arginine 136 provides a ligand contact to a 1,2-diacyl-sn-glycero-3-phospho-(1'-sn-glycerol).

Belongs to the Lgt family.

It localises to the cell membrane. It carries out the reaction L-cysteinyl-[prolipoprotein] + a 1,2-diacyl-sn-glycero-3-phospho-(1'-sn-glycerol) = an S-1,2-diacyl-sn-glyceryl-L-cysteinyl-[prolipoprotein] + sn-glycerol 1-phosphate + H(+). The protein operates within protein modification; lipoprotein biosynthesis (diacylglyceryl transfer). Its function is as follows. Catalyzes the transfer of the diacylglyceryl group from phosphatidylglycerol to the sulfhydryl group of the N-terminal cysteine of a prolipoprotein, the first step in the formation of mature lipoproteins. The polypeptide is Phosphatidylglycerol--prolipoprotein diacylglyceryl transferase (Thermoanaerobacter pseudethanolicus (strain ATCC 33223 / 39E) (Clostridium thermohydrosulfuricum)).